A 1390-amino-acid polypeptide reads, in one-letter code: DNA-directed RNA polymerase subunit beta (1390 aa).

The segment at 556–576 (KLADQDAENDPDSDLGTKSSN) is disordered.

The protein belongs to the RNA polymerase beta chain family. In terms of assembly, the RNAP catalytic core consists of 2 alpha, 1 beta, 1 beta' and 1 omega subunit. When a sigma factor is associated with the core the holoenzyme is formed, which can initiate transcription.

The enzyme catalyses RNA(n) + a ribonucleoside 5'-triphosphate = RNA(n+1) + diphosphate. In terms of biological role, DNA-dependent RNA polymerase catalyzes the transcription of DNA into RNA using the four ribonucleoside triphosphates as substrates. The sequence is that of DNA-directed RNA polymerase subunit beta from Mycoplasmoides gallisepticum (strain R(low / passage 15 / clone 2)) (Mycoplasma gallisepticum).